The chain runs to 185 residues: Putative sulfur carrier protein YrkF (185 aa).

Residue C15 is the Cysteine persulfide intermediate of the active site. Residues 101 to 185 form the Rhodanese domain; sequence SDESLNILDV…GMRDWTGKTE (85 aa).

The protein belongs to the sulfur carrier protein TusA family.

The protein is Putative sulfur carrier protein YrkF (yrkF) of Bacillus subtilis (strain 168).